The chain runs to 60 residues: Metallothionein A (60 aa).

The interval 1-28 (MDPCECSKSGNCNCGGSCTCTNCSCKSC) is beta. A divalent metal cation-binding residues include cysteine 4, cysteine 6, cysteine 12, cysteine 14, cysteine 18, cysteine 20, cysteine 23, cysteine 25, cysteine 28, cysteine 32, cysteine 33, cysteine 35, cysteine 36, cysteine 40, cysteine 43, cysteine 47, cysteine 49, cysteine 54, cysteine 58, and cysteine 59. The interval 29-60 (KKSCCPCCPSGCTKCASGCVCIGKTCDTSCCQ) is alpha.

The protein belongs to the metallothionein superfamily. Type 1 family.

Its function is as follows. Metallothioneins have a high content of cysteine residues that bind various heavy metals. The sequence is that of Metallothionein A (mta) from Chaenocephalus aceratus (Blackfin icefish).